A 277-amino-acid chain; its full sequence is Myelin proteolipid protein (277 aa).

Topologically, residues 1–10 (MGLLECCARC) are cytoplasmic. Residues Cys6, Cys7, and Cys10 are each lipidated (S-palmitoyl cysteine). Residues 11-36 (LVGAPFASLVATGLCFFGVALFCGCG) traverse the membrane as a helical segment. The Extracellular portion of the chain corresponds to 37 to 59 (HEALTGTEKLIETYFSKNYQDYE). A helical membrane pass occupies residues 60 to 88 (YLINVIHAFQYVIYGTASFFFLYGALLLA). The Cytoplasmic segment spans residues 89-151 (EGFYTTGAVR…LGKWLGHPDK (63 aa)). Cys109 is lipidated: S-palmitoyl cysteine. Ser114 is subject to Phosphoserine. Phosphothreonine is present on residues Thr116 and Thr118. Residues Cys139 and Cys141 are each lipidated (S-palmitoyl cysteine). A helical membrane pass occupies residues 152 to 178 (FVGITYALTVVWLLVFACSAVPVYIYF). The Extracellular portion of the chain corresponds to 179–238 (NTWTTCQSIAFPSKTSASIGTLCADARMYGVLPWNAFPGKVCGSNLLSICKTAEFQMTFH). Intrachain disulfides connect Cys184–Cys228 and Cys201–Cys220. Thr199 carries O-palmitoyl threonine lipidation. Residues 239 to 268 (LFIAAFVGAAATLVSLLTFMIAATYNFAVL) traverse the membrane as a helical segment. Residues 269–277 (KLMGRGTKF) lie on the Cytoplasmic side of the membrane.

This sequence belongs to the myelin proteolipid protein family. As to quaternary structure, interacts with MAL.

It localises to the cell membrane. The protein resides in the myelin membrane. Functionally, this is the major myelin protein from the central nervous system. It plays an important role in the formation or maintenance of the multilamellar structure of myelin. This chain is Myelin proteolipid protein (PLP1), found in Oryctolagus cuniculus (Rabbit).